Reading from the N-terminus, the 143-residue chain is Transcriptional regulator MraZ (143 aa).

SpoVT-AbrB domains are found at residues 5-47 and 76-119; these read EYQH…SLEE and AAEV…DKSK.

The protein belongs to the MraZ family. As to quaternary structure, forms oligomers.

The protein resides in the cytoplasm. Its subcellular location is the nucleoid. The protein is Transcriptional regulator MraZ of Acetivibrio thermocellus (strain ATCC 27405 / DSM 1237 / JCM 9322 / NBRC 103400 / NCIMB 10682 / NRRL B-4536 / VPI 7372) (Clostridium thermocellum).